The sequence spans 253 residues: Triosephosphate isomerase (253 aa).

Residue asparagine 9–lysine 11 participates in substrate binding. Histidine 95 (electrophile) is an active-site residue. Residue glutamate 167 is the Proton acceptor of the active site. Residues glycine 173, serine 213, and glycine 234–glycine 235 contribute to the substrate site. Residue serine 213 is modified to Phosphoserine.

The protein belongs to the triosephosphate isomerase family. Homodimer.

It is found in the cytoplasm. It carries out the reaction D-glyceraldehyde 3-phosphate = dihydroxyacetone phosphate. Its pathway is carbohydrate biosynthesis; gluconeogenesis. It functions in the pathway carbohydrate degradation; glycolysis; D-glyceraldehyde 3-phosphate from glycerone phosphate: step 1/1. Its function is as follows. Involved in the gluconeogenesis. Catalyzes stereospecifically the conversion of dihydroxyacetone phosphate (DHAP) to D-glyceraldehyde-3-phosphate (G3P). The chain is Triosephosphate isomerase from Lysinibacillus sphaericus (strain C3-41).